A 206-amino-acid polypeptide reads, in one-letter code: Putative apoptosis inhibitor 021L (206 aa).

Residues 95-105 (TSKSPVSNQPS) show a composition bias toward polar residues. Residues 95–114 (TSKSPVSNQPSPEEDEPIPD) are disordered. Residues 157-195 (CVVCQANVRNVVFVPCNHLATCISCSANPLMPKKCPMCR) form an RING-type zinc finger.

It belongs to the IIV-6 193R family.

Functionally, plays a role early in infection by preventing host cell apoptosis. This is Putative apoptosis inhibitor 021L from Aedes vexans (Inland floodwater mosquito).